A 113-amino-acid polypeptide reads, in one-letter code: Ig heavy chain V-III region U61 (113 aa).

Residues 1 to 113 (EVKLEESGGG…YWGQGTLVPV (113 aa)) form the Ig-like domain. Residues Cys-22 and Cys-98 are joined by a disulfide bond.

The sequence is that of Ig heavy chain V-III region U61 from Mus musculus (Mouse).